Reading from the N-terminus, the 196-residue chain is dITP/XTP pyrophosphatase (196 aa).

Residue 10 to 15 (SGNKGK) coordinates substrate. Positions 40 and 69 each coordinate Mg(2+). Residue aspartate 69 is the Proton acceptor of the active site. Substrate contacts are provided by residues serine 70, 147–150 (FGYD), lysine 170, and 175–176 (HR).

This sequence belongs to the HAM1 NTPase family. As to quaternary structure, homodimer. The cofactor is Mg(2+).

It carries out the reaction XTP + H2O = XMP + diphosphate + H(+). The enzyme catalyses dITP + H2O = dIMP + diphosphate + H(+). The catalysed reaction is ITP + H2O = IMP + diphosphate + H(+). Functionally, pyrophosphatase that catalyzes the hydrolysis of nucleoside triphosphates to their monophosphate derivatives, with a high preference for the non-canonical purine nucleotides XTP (xanthosine triphosphate), dITP (deoxyinosine triphosphate) and ITP. Seems to function as a house-cleaning enzyme that removes non-canonical purine nucleotides from the nucleotide pool, thus preventing their incorporation into DNA/RNA and avoiding chromosomal lesions. This chain is dITP/XTP pyrophosphatase, found in Prochlorococcus marinus (strain NATL1A).